Reading from the N-terminus, the 497-residue chain is METHKSLLFFTNYVLFLVFTLSFLPIPGLLASRLNPFEPGILMPTEEAEPVQVDDDDQLGTRWAVLVAGSMGFGNYRHQADVCHAYQLLRKGGLKEENIIVFMYDDIAKNELNPRPGVIINHPQGEDVYAGVPKDYTGEHVTAKNLYAVLLGDKSAVQGGSGKVVDSKPNDRIFLYYSDHGGPGVLGMPNLPYLYAMDFIEVLKKKHAAGGYKKMVIYVEACESGSIFEGIMPKDVDIYVTTASNAQESSWGTYCPGMEPSPPPEFTTCLGDLYSVAWMEDSESHNLKKETVKQQYSSVKARTSNYNTYAAGSHVMQYGNQSIKADKLYLFQGFDPASVNFPPNNAHLNAPMEVVNQRDAELHFMWQLYKRSENGSEKKKEILQQIKDAIKHRSHLDSSMQLIGDLLFGPKKASAILKSVREPGSPLVDDWGCLKSMVRVFETCCGSLTQYGMKHMRTFANICNAGVSHTSMEEACNAACSGHDAGQWHPTNQGYSA.

The first 31 residues, 1-31 (METHKSLLFFTNYVLFLVFTLSFLPIPGLLA), serve as a signal peptide directing secretion. H180 is a catalytic residue. C222 acts as the Nucleophile in catalysis. An intrachain disulfide couples C255 to C269. N-linked (GlcNAc...) asparagine glycosylation is found at N320 and N374. 2 disulfide bridges follow: C433–C463 and C445–C480.

It belongs to the peptidase C13 family.

Asparagine-specific endopeptidase involved in the processing of vacuolar seed protein precursors into the mature forms. The protein is Vacuolar-processing enzyme of Ricinus communis (Castor bean).